The primary structure comprises 374 residues: Quinolinate synthase (374 aa).

Residues H53 and S70 each contribute to the iminosuccinate site. C116 is a binding site for [4Fe-4S] cluster. Iminosuccinate contacts are provided by residues 148-150 and S169; that span reads YMN. C236 contacts [4Fe-4S] cluster. Residues 262–264 and T279 each bind iminosuccinate; that span reads HPE. Position 327 (C327) interacts with [4Fe-4S] cluster.

Belongs to the quinolinate synthase family. Type 3 subfamily. It depends on [4Fe-4S] cluster as a cofactor.

It is found in the cytoplasm. The enzyme catalyses iminosuccinate + dihydroxyacetone phosphate = quinolinate + phosphate + 2 H2O + H(+). It functions in the pathway cofactor biosynthesis; NAD(+) biosynthesis; quinolinate from iminoaspartate: step 1/1. Functionally, catalyzes the condensation of iminoaspartate with dihydroxyacetone phosphate to form quinolinate. This is Quinolinate synthase from Halobacterium salinarum (strain ATCC 29341 / DSM 671 / R1).